Reading from the N-terminus, the 522-residue chain is GMP synthase [glutamine-hydrolyzing] (522 aa).

Residues 8 to 204 (RLLIIDFGSQ…FVRLAGFKGD (197 aa)) enclose the Glutamine amidotransferase type-1 domain. C86 functions as the Nucleophile in the catalytic mechanism. Catalysis depends on residues H179 and E181. A GMPS ATP-PPase domain is found at 205–397 (WTMGAYREEA…LGLPASFIGR (193 aa)). ATP is bound at residue 232–238 (SGGVDSS).

Homodimer.

It carries out the reaction XMP + L-glutamine + ATP + H2O = GMP + L-glutamate + AMP + diphosphate + 2 H(+). It participates in purine metabolism; GMP biosynthesis; GMP from XMP (L-Gln route): step 1/1. Its function is as follows. Catalyzes the synthesis of GMP from XMP. This Roseobacter denitrificans (strain ATCC 33942 / OCh 114) (Erythrobacter sp. (strain OCh 114)) protein is GMP synthase [glutamine-hydrolyzing].